Reading from the N-terminus, the 644-residue chain is Threonine--tRNA ligase (644 aa).

The region spanning 1–61 (MPDIQLPDGS…DQDAEVAIVT (61 aa)) is the TGS domain. The segment at 242 to 535 (DHRRIGTELE…LIEHYEGKFP (294 aa)) is catalytic. Zn(2+) is bound by residues Cys335, His386, and His512.

Belongs to the class-II aminoacyl-tRNA synthetase family. As to quaternary structure, homodimer. Zn(2+) is required as a cofactor.

It localises to the cytoplasm. It catalyses the reaction tRNA(Thr) + L-threonine + ATP = L-threonyl-tRNA(Thr) + AMP + diphosphate + H(+). Catalyzes the attachment of threonine to tRNA(Thr) in a two-step reaction: L-threonine is first activated by ATP to form Thr-AMP and then transferred to the acceptor end of tRNA(Thr). Also edits incorrectly charged L-seryl-tRNA(Thr). The chain is Threonine--tRNA ligase from Acidithiobacillus ferrooxidans (strain ATCC 23270 / DSM 14882 / CIP 104768 / NCIMB 8455) (Ferrobacillus ferrooxidans (strain ATCC 23270)).